A 239-amino-acid polypeptide reads, in one-letter code: 1-(5-phosphoribosyl)-5-[(5-phosphoribosylamino)methylideneamino] imidazole-4-carboxamide isomerase (239 aa).

Aspartate 9 (proton acceptor) is an active-site residue. Aspartate 131 (proton donor) is an active-site residue.

This sequence belongs to the HisA/HisF family.

Its subcellular location is the cytoplasm. It catalyses the reaction 1-(5-phospho-beta-D-ribosyl)-5-[(5-phospho-beta-D-ribosylamino)methylideneamino]imidazole-4-carboxamide = 5-[(5-phospho-1-deoxy-D-ribulos-1-ylimino)methylamino]-1-(5-phospho-beta-D-ribosyl)imidazole-4-carboxamide. The protein operates within amino-acid biosynthesis; L-histidine biosynthesis; L-histidine from 5-phospho-alpha-D-ribose 1-diphosphate: step 4/9. This is 1-(5-phosphoribosyl)-5-[(5-phosphoribosylamino)methylideneamino] imidazole-4-carboxamide isomerase from Phocaeicola vulgatus (strain ATCC 8482 / DSM 1447 / JCM 5826 / CCUG 4940 / NBRC 14291 / NCTC 11154) (Bacteroides vulgatus).